The primary structure comprises 525 residues: ATP synthase subunit alpha (525 aa).

172–179 (GDRQTGKT) is an ATP binding site.

The protein belongs to the ATPase alpha/beta chains family. In terms of assembly, F-type ATPases have 2 components, CF(1) - the catalytic core - and CF(0) - the membrane proton channel. CF(1) has five subunits: alpha(3), beta(3), gamma(1), delta(1), epsilon(1). CF(0) has three main subunits: a(1), b(2) and c(9-12). The alpha and beta chains form an alternating ring which encloses part of the gamma chain. CF(1) is attached to CF(0) by a central stalk formed by the gamma and epsilon chains, while a peripheral stalk is formed by the delta and b chains.

It is found in the cell inner membrane. The catalysed reaction is ATP + H2O + 4 H(+)(in) = ADP + phosphate + 5 H(+)(out). Its function is as follows. Produces ATP from ADP in the presence of a proton gradient across the membrane. The alpha chain is a regulatory subunit. This is ATP synthase subunit alpha from Parabacteroides distasonis (strain ATCC 8503 / DSM 20701 / CIP 104284 / JCM 5825 / NCTC 11152).